Here is a 249-residue protein sequence, read N- to C-terminus: Coproheme decarboxylase (249 aa).

Residues Arg-131, 145–149 (YPMDK), His-172, Gln-185, and Ser-223 contribute to the Fe-coproporphyrin III site. The active site involves Tyr-145.

It belongs to the ChdC family. Type 1 subfamily. The cofactor is Fe-coproporphyrin III.

The enzyme catalyses Fe-coproporphyrin III + 2 H2O2 + 2 H(+) = heme b + 2 CO2 + 4 H2O. The catalysed reaction is Fe-coproporphyrin III + H2O2 + H(+) = harderoheme III + CO2 + 2 H2O. It carries out the reaction harderoheme III + H2O2 + H(+) = heme b + CO2 + 2 H2O. It functions in the pathway porphyrin-containing compound metabolism; protoheme biosynthesis. Involved in coproporphyrin-dependent heme b biosynthesis. Catalyzes the decarboxylation of Fe-coproporphyrin III (coproheme) to heme b (protoheme IX), the last step of the pathway. The reaction occurs in a stepwise manner with a three-propionate intermediate. The protein is Coproheme decarboxylase of Shouchella clausii (strain KSM-K16) (Alkalihalobacillus clausii).